The sequence spans 121 residues: MFNKCSFHSSIYRPAADNSASSLCAIICFLNLVIECDLETNSEINKLIIYLFSQNNRIRFSKLLLKILFYISIFSYPELMCEQYVTFIKPGIHYGQVSKKHIIYSTFLSKNFKFQLLRVCW.

As to expression, specifically expressed in chronic lymphocytic leukemia (CLL) cells from patients without immunoglobulin heavy-chain hypermutations. Expression is detected in all CLL cells and levels are similar in patients before and after treatment.

It is found in the cytoplasm. This chain is Chronic lymphocytic leukemia up-regulated protein 1 (CLLU1), found in Homo sapiens (Human).